The sequence spans 290 residues: S-methyl-5'-thioadenosine phosphorylase (290 aa).

Residues S11, 53–54, and 86–87 contribute to the phosphate site; these read RH and SA. A substrate-binding site is contributed by M184. T185 contributes to the phosphate binding site. 208–210 contributes to the substrate binding site; the sequence is DYD.

It belongs to the PNP/MTAP phosphorylase family. MTAP subfamily. Homohexamer. Dimer of a homotrimer.

It carries out the reaction S-methyl-5'-thioadenosine + phosphate = 5-(methylsulfanyl)-alpha-D-ribose 1-phosphate + adenine. It participates in amino-acid biosynthesis; L-methionine biosynthesis via salvage pathway; S-methyl-5-thio-alpha-D-ribose 1-phosphate from S-methyl-5'-thioadenosine (phosphorylase route): step 1/1. In terms of biological role, catalyzes the reversible phosphorylation of S-methyl-5'-thioadenosine (MTA) to adenine and 5-methylthioribose-1-phosphate. Involved in the breakdown of MTA, a major by-product of polyamine biosynthesis. Responsible for the first step in the methionine salvage pathway after MTA has been generated from S-adenosylmethionine. Has broad substrate specificity with 6-aminopurine nucleosides as preferred substrates. The protein is S-methyl-5'-thioadenosine phosphorylase of Cereibacter sphaeroides (strain ATCC 17023 / DSM 158 / JCM 6121 / CCUG 31486 / LMG 2827 / NBRC 12203 / NCIMB 8253 / ATH 2.4.1.) (Rhodobacter sphaeroides).